Consider the following 91-residue polypeptide: MDLEGKCCLIHAIGGIIFGYLANYVYTAGLGIFSGIATLIFLFIGAVIFGHISAKTFGEESLTQKQWLGCGVLPFFLVAIVVWVLKFNGLI.

3 consecutive transmembrane segments (helical) span residues 9 to 29 (LIHA…YTAG), 30 to 50 (LGIF…VIFG), and 67 to 87 (WLGC…VLKF).

The protein resides in the cell membrane. This is an uncharacterized protein from Methanocaldococcus jannaschii (strain ATCC 43067 / DSM 2661 / JAL-1 / JCM 10045 / NBRC 100440) (Methanococcus jannaschii).